Here is a 431-residue protein sequence, read N- to C-terminus: Phosphoribosylamine--glycine ligase (431 aa).

In terms of domain architecture, ATP-grasp spans 108–315; the sequence is KDFLARHKIP…LVLLIEAALA (208 aa). 134–195 contributes to the ATP binding site; sequence LREKGAPIVI…EEFLDGEEAS (62 aa). Mg(2+)-binding residues include glutamate 285 and asparagine 287.

Belongs to the GARS family. Mg(2+) serves as cofactor. Requires Mn(2+) as cofactor.

It catalyses the reaction 5-phospho-beta-D-ribosylamine + glycine + ATP = N(1)-(5-phospho-beta-D-ribosyl)glycinamide + ADP + phosphate + H(+). Its pathway is purine metabolism; IMP biosynthesis via de novo pathway; N(1)-(5-phospho-D-ribosyl)glycinamide from 5-phospho-alpha-D-ribose 1-diphosphate: step 2/2. The protein is Phosphoribosylamine--glycine ligase of Pseudomonas syringae pv. tomato (strain ATCC BAA-871 / DC3000).